The sequence spans 217 residues: Oxygen regulatory protein NreC (217 aa).

The 118-residue stretch at 2 to 119 folds into the Response regulatory domain; the sequence is KIVIADDHAV…QLLLAIRTVY (118 aa). Aspartate 53 is modified (4-aspartylphosphate). An HTH luxR-type domain is found at 148–213; that stretch reads TSDPFKILSK…ELVEYALKKK (66 aa). The H-T-H motif DNA-binding region spans 172–191; the sequence is NKEIAEKLFVSVKTVEAHKT.

In terms of processing, phosphorylated by NreB.

Its subcellular location is the cytoplasm. Its function is as follows. Member of the two-component regulatory system NreB/NreC involved in the control of dissimilatory nitrate/nitrite reduction in response to oxygen. Phosphorylated NreC binds to a GC-rich palindromic sequence at the promoters of the nitrate (narGHJI) and nitrite (nir) reductase operons, as well as the putative nitrate transporter gene narT, and activates their expression. The polypeptide is Oxygen regulatory protein NreC (nreC) (Staphylococcus aureus (strain bovine RF122 / ET3-1)).